The primary structure comprises 171 residues: ATP synthase subunit b (171 aa).

The helical transmembrane segment at 3-23 (KFLFFIFVFVGISFAGDDTAT) threads the bilayer.

It belongs to the ATPase B chain family. F-type ATPases have 2 components, F(1) - the catalytic core - and F(0) - the membrane proton channel. F(1) has five subunits: alpha(3), beta(3), gamma(1), delta(1), epsilon(1). F(0) has three main subunits: a(1), b(2) and c(10-14). The alpha and beta chains form an alternating ring which encloses part of the gamma chain. F(1) is attached to F(0) by a central stalk formed by the gamma and epsilon chains, while a peripheral stalk is formed by the delta and b chains.

The protein localises to the cell inner membrane. In terms of biological role, f(1)F(0) ATP synthase produces ATP from ADP in the presence of a proton or sodium gradient. F-type ATPases consist of two structural domains, F(1) containing the extramembraneous catalytic core and F(0) containing the membrane proton channel, linked together by a central stalk and a peripheral stalk. During catalysis, ATP synthesis in the catalytic domain of F(1) is coupled via a rotary mechanism of the central stalk subunits to proton translocation. Its function is as follows. Component of the F(0) channel, it forms part of the peripheral stalk, linking F(1) to F(0). This chain is ATP synthase subunit b, found in Campylobacter hominis (strain ATCC BAA-381 / DSM 21671 / CCUG 45161 / LMG 19568 / NCTC 13146 / CH001A).